A 422-amino-acid polypeptide reads, in one-letter code: MKISLLGHGKTTLALGRFFKKNHNEVKFFDDKFLSSFKDSEGFLCYPSKDFNPNDSQLEIVSPGISFTHPLVIKAKHLVSEYDYINSLFDLVFTPTIISISGTNGKTTTTEMLTMLLEDFKAVSGGNIGTPLIELFEKRSPLWVLETSSFSLHYTNKAYPLIYLLINIEADHLTWHCNFENYLNAKLKVLTLMPKTSLAILPLKFKEHPIIQNSQAQKIFFDKSEEVLERLKIPSNALFFKGAFLLDAALALLVYEQFLKIKNLKWQDYRENALKRLNAFKIGSHKMEEFRDKQGRLWVDDSKATNIDATLQALKTFKNQKIHLILGGDIKGVNLTPLFEEFKNYKISLYAIGSSAFIIQALALEFNVSCQVCLELEKAVQEIKSVLSQNEIALLSPSAASLDQFSSYKERGEKFKAFVLKD.

102–108 (GTNGKTT) is an ATP binding site.

It belongs to the MurCDEF family.

It is found in the cytoplasm. It carries out the reaction UDP-N-acetyl-alpha-D-muramoyl-L-alanine + D-glutamate + ATP = UDP-N-acetyl-alpha-D-muramoyl-L-alanyl-D-glutamate + ADP + phosphate + H(+). It participates in cell wall biogenesis; peptidoglycan biosynthesis. Functionally, cell wall formation. Catalyzes the addition of glutamate to the nucleotide precursor UDP-N-acetylmuramoyl-L-alanine (UMA). In Helicobacter pylori (strain ATCC 700392 / 26695) (Campylobacter pylori), this protein is UDP-N-acetylmuramoylalanine--D-glutamate ligase.